A 336-amino-acid chain; its full sequence is Cell division protein ZipA (336 aa).

Residues 1-2 are Periplasmic-facing; it reads ME. The chain crosses the membrane as a helical span at residues 3-23; sequence LHILFFILAGLLIAVLISFSL. Over 24 to 336 the chain is Cytoplasmic; the sequence is WSARREKSRI…SRQSYLARVS (313 aa). The tract at residues 56–77 is disordered; that stretch reads PSLNPQSYAQTTGQHGETEADN. The segment covering 59–70 has biased composition (polar residues); that stretch reads NPQSYAQTTGQH.

It belongs to the ZipA family. As to quaternary structure, interacts with FtsZ via their C-terminal domains.

Its subcellular location is the cell inner membrane. In terms of biological role, essential cell division protein that stabilizes the FtsZ protofilaments by cross-linking them and that serves as a cytoplasmic membrane anchor for the Z ring. Also required for the recruitment to the septal ring of downstream cell division proteins. This chain is Cell division protein ZipA, found in Actinobacillus pleuropneumoniae serotype 3 (strain JL03).